The primary structure comprises 295 residues: Tyrosine recombinase XerD (295 aa).

One can recognise a Core-binding (CB) domain in the interval 1–85 (METIIEEYLR…TIRSFHQFAI (85 aa)). The Tyr recombinase domain occupies 106–289 (KLPDVLNVDE…SKSQIRKMYN (184 aa)). Residues arginine 146, lysine 170, histidine 241, arginine 244, and histidine 267 contribute to the active site. The O-(3'-phospho-DNA)-tyrosine intermediate role is filled by tyrosine 276.

The protein belongs to the 'phage' integrase family. XerD subfamily. In terms of assembly, forms a cyclic heterotetrameric complex composed of two molecules of XerC and two molecules of XerD.

The protein localises to the cytoplasm. Site-specific tyrosine recombinase, which acts by catalyzing the cutting and rejoining of the recombining DNA molecules. The XerC-XerD complex is essential to convert dimers of the bacterial chromosome into monomers to permit their segregation at cell division. It also contributes to the segregational stability of plasmids. The polypeptide is Tyrosine recombinase XerD (Staphylococcus aureus (strain COL)).